Reading from the N-terminus, the 912-residue chain is Probable dipeptidyl-aminopeptidase B (912 aa).

Disordered regions lie at residues 1-30 (MAAEKGGSSDEERKPLTRGSMEYRDSSNSL) and 48-68 (NGSTHDTGPDEIGRGDRDYSD). Residues 1-92 (MAAEKGGSSD…GGKPVQKKVK (92 aa)) lie on the Cytoplasmic side of the membrane. Composition is skewed to basic and acidic residues over residues 7 to 25 (GSSDEERKPLTRGSMEYRD) and 54 to 67 (TGPDEIGRGDRDYS). A helical; Signal-anchor for type II membrane protein membrane pass occupies residues 93–113 (IVLGFLLFLCLSGWSLAFVLF). Residues 114–912 (LFGGHESSKT…RAATWVGMSI (799 aa)) are Vacuolar-facing. Asn-130, Asn-210, Asn-346, Asn-569, and Asn-656 each carry an N-linked (GlcNAc...) asparagine glycan. Residue Ser-751 is the Charge relay system of the active site. Asn-810 is a glycosylation site (N-linked (GlcNAc...) asparagine). Catalysis depends on charge relay system residues Asp-828 and His-861. N-linked (GlcNAc...) asparagine glycosylation occurs at Asn-897.

The protein belongs to the peptidase S9B family.

Its subcellular location is the vacuole membrane. The enzyme catalyses Release of an N-terminal dipeptide, Xaa-Yaa-|-Zaa-, from a polypeptide, preferentially when Yaa is Pro, provided Zaa is neither Pro nor hydroxyproline.. Its function is as follows. Type IV dipeptidyl-peptidase which removes N-terminal dipeptides sequentially from polypeptides having unsubstituted N-termini provided that the penultimate residue is proline. This Paracoccidioides brasiliensis (strain Pb18) protein is Probable dipeptidyl-aminopeptidase B (DAPB).